Consider the following 409-residue polypeptide: Secreted LysM effector Blys2 (409 aa).

The N-terminal stretch at 1 to 20 (MTRFTTTLVAALAGANLAAA) is a signal peptide. The 48-residue stretch at 24–71 (YKWRAHAGDTCDSLSSDWSVQVSDFIKWNPSVGANCSNGVTAGQEYCV) folds into the LysM 1 domain. An N-linked (GlcNAc...) asparagine glycan is attached at Asn58. The disordered stretch occupies residues 74–111 (NGAGSKPTTPPTGSPTTLTTAVTTASSTPTQPTDGAPS). Residues 87–106 (SPTTLTTAVTTASSTPTQPT) show a composition bias toward low complexity. LysM domains are found at residues 129 to 176 (AWYK…YVCV), 206 to 253 (KWYK…FVCV), 283 to 330 (KFYK…YYCI), and 357 to 405 (KYYK…YICV).

It belongs to the secreted LysM effector family.

It localises to the secreted. The protein resides in the cell wall. Secreted effector that enables the plant pathogenic fungus to manipulate host defenses for successful infection. Required for the full virulence to infect insect hosts. In contrast to Blys5, Blys2 is not able to protect fungal hyphae against the hydrolytic activity of chitinase but plays an important role in evasion of insect immunities. Binds chitin. Coats and protects the cell walls of insect pathogens from host cell recognition. The polypeptide is Secreted LysM effector Blys2 (Beauveria bassiana (strain ARSEF 2860) (White muscardine disease fungus)).